We begin with the raw amino-acid sequence, 491 residues long: Lysine--tRNA ligase (491 aa).

Positions 399 and 406 each coordinate Mg(2+).

This sequence belongs to the class-II aminoacyl-tRNA synthetase family. In terms of assembly, homodimer. Requires Mg(2+) as cofactor.

Its subcellular location is the cytoplasm. It carries out the reaction tRNA(Lys) + L-lysine + ATP = L-lysyl-tRNA(Lys) + AMP + diphosphate. The polypeptide is Lysine--tRNA ligase (Chloroflexus aurantiacus (strain ATCC 29366 / DSM 635 / J-10-fl)).